We begin with the raw amino-acid sequence, 714 residues long: Polyribonucleotide nucleotidyltransferase (714 aa).

Residues Asp488 and Asp494 each contribute to the Mg(2+) site. The KH domain maps to 555 to 614 (PRIEVMNIPTDKIRDVIGSGGKVIREIVEKTGAKINIEDDGTVKIASSNGKEIEAAKKWI). In terms of domain architecture, S1 motif spans 624–692 (GEIYEGTVVK…ERGKVRLSMK (69 aa)).

It belongs to the polyribonucleotide nucleotidyltransferase family. It depends on Mg(2+) as a cofactor.

The protein resides in the cytoplasm. It catalyses the reaction RNA(n+1) + phosphate = RNA(n) + a ribonucleoside 5'-diphosphate. Functionally, involved in mRNA degradation. Catalyzes the phosphorolysis of single-stranded polyribonucleotides processively in the 3'- to 5'-direction. The sequence is that of Polyribonucleotide nucleotidyltransferase from Brucella abortus biovar 1 (strain 9-941).